Reading from the N-terminus, the 638-residue chain is RAF proto-oncogene serine/threonine-protein kinase (638 aa).

A Phosphoserine modification is found at Ser43. An RBD domain is found at 56-130; that stretch reads STMRVYLPNK…VGAELQVDFL (75 aa). A Phorbol-ester/DAG-type zinc finger spans residues 137-183; that stretch reads THNFVRKTFLKLAFCDICQKFLLNAFRCQTCGYKFHEHCSTKVPTMC. His138, Cys151, Cys154, Cys164, Cys167, His172, Cys175, and Cys183 together coordinate Zn(2+). Position 257 is a phosphoserine (Ser257). Phosphothreonine; by autocatalysis is present on Thr266. The segment at 279–323 is disordered; that stretch reads LRSHSESGSPNNLSPTGWSNAKAPAPTHREKAASSTGQEKNKIRA. Over residues 284-297 the composition is skewed to polar residues; the sequence is ESGSPNNLSPTGWS. A Phosphoserine modification is found at Ser329. The Protein kinase domain maps to 340–600; that stretch reads VMLSSRIGSG…PQILSSIELL (261 aa). ATP contacts are provided by residues 346–354 and Lys366; that span reads IGSGSFGTV. Catalysis depends on Asp459, which acts as the Proton acceptor. The residue at position 490 (Ser490) is a Phosphoserine.

It belongs to the protein kinase superfamily. TKL Ser/Thr protein kinase family. RAF subfamily. It depends on Zn(2+) as a cofactor. Phosphorylation at Ser-257 inactivates kinase activity. Dephosphorylation of Ser-257 by a complex containing protein phosphatase 1 relieves inactivation, leading to stimulate RAF1 activity.

It localises to the cytoplasm. It is found in the cell membrane. The enzyme catalyses L-seryl-[protein] + ATP = O-phospho-L-seryl-[protein] + ADP + H(+). The catalysed reaction is L-threonyl-[protein] + ATP = O-phospho-L-threonyl-[protein] + ADP + H(+). Serine/threonine-protein kinase that acts as a regulatory link between the membrane-associated Ras GTPases and the MAPK/ERK cascade, and this critical regulatory link functions as a switch determining cell fate decisions. RAF1 activation initiates a mitogen-activated protein kinase (MAPK) cascade that comprises a sequential phosphorylation of the dual-specific MAPK kinases (MAP2K1/MEK1 and MAP2K2/MEK2) and the extracellular signal-regulated kinases (MAPK3/ERK1 and MAPK1/ERK2). This chain is RAF proto-oncogene serine/threonine-protein kinase (raf1), found in Xenopus laevis (African clawed frog).